A 356-amino-acid chain; its full sequence is Neutral protease 2 homolog UREG_03761 (356 aa).

A signal peptide spans 1–19; it reads MRFSSSFLSVLALASQALA. Positions 20–181 are excised as a propeptide; that stretch reads FPLNDLPTTD…ALPEATLDKR (162 aa). 2 disulfides stabilise this stretch: Cys-189–Cys-259 and Cys-266–Cys-284. His-308 is a binding site for Zn(2+). Glu-309 is a catalytic residue. Positions 312 and 323 each coordinate Zn(2+).

Belongs to the peptidase M35 family. Zn(2+) is required as a cofactor.

Its subcellular location is the secreted. It catalyses the reaction Preferential cleavage of bonds with hydrophobic residues in P1'. Also 3-Asn-|-Gln-4 and 8-Gly-|-Ser-9 bonds in insulin B chain.. In terms of biological role, secreted metalloproteinase that allows assimilation of proteinaceous substrates. Shows high activities on basic nuclear substrates such as histone and protamine. This chain is Neutral protease 2 homolog UREG_03761, found in Uncinocarpus reesii (strain UAMH 1704).